Here is a 60-residue protein sequence, read N- to C-terminus: Large ribosomal subunit protein uL30 (60 aa).

This sequence belongs to the universal ribosomal protein uL30 family. In terms of assembly, part of the 50S ribosomal subunit.

The protein is Large ribosomal subunit protein uL30 of Shewanella woodyi (strain ATCC 51908 / MS32).